We begin with the raw amino-acid sequence, 414 residues long: MLRRLVISIMLGMVSALIVWLFHQAMLGLEWLLFSRTDGSLVAAAASITGWRRALTPALGGLAAGLLLWAYQRYQHRKPSAPTDYMEAIEIGDGRLDVSASLVKSLASLLVVSSGSAIGREGAMVLLAALFASVFAQRYAKPKEWKLWVACGAAAGMASAYHAPLAGSLFIAEILFGTLMLASLGPVVIAAVSALLTTNLLQGGQETLYQVQTLPSPWPVQYFLMALLGLMAGFSGPLFLKAMAASSHAFRSLNLLPPLQLALGGIIVGLLSLIFPEVWGNGYSVVQSLLTTPPGVLLIGGILICKLLAVLASSGSGAPGGVFTPTLFVGAALGMLCGQIFSLWPVLGDNIGLLMALTGMATLLAATTHAPIMAALMVCEMTGEYTLLPGLLLSCVIATTIARWLRPISVYRSH.

11 consecutive transmembrane segments (helical) span residues 5–25, 54–74, 116–136, 147–167, 169–189, 220–240, 255–275, 292–312, 327–347, 353–373, and 381–401; these read LVISIMLGMVSALIVWLFHQA, ALTPALGGLAAGLLLWAYQRY, SAIGREGAMVLLAALFASVFA, LWVACGAAAGMASAYHAPLAG, LFIAEILFGTLMLASLGPVVI, VQYFLMALLGLMAGFSGPLFL, LLPPLQLALGGIIVGLLSLIF, TPPGVLLIGGILICKLLAVLA, LFVGAALGMLCGQIFSLWPVL, LLMALTGMATLLAATTHAPIM, and MTGEYTLLPGLLLSCVIATTI.

It belongs to the chloride channel (TC 2.A.49) family. ClcB subfamily.

Its subcellular location is the cell inner membrane. In terms of biological role, probably acts as an electrical shunt for an outwardly-directed proton pump that is linked to amino acid decarboxylation, as part of the extreme acid resistance (XAR) response. This Yersinia pseudotuberculosis serotype O:1b (strain IP 31758) protein is Voltage-gated ClC-type chloride channel ClcB.